The following is a 334-amino-acid chain: L-lactate dehydrogenase B-A chain (334 aa).

Residues 30 to 58 (GQVGMACAVSVLLRELADELALVDVVEDR) and Arg-100 each bind NAD(+). Residues Arg-107, Asn-139, and Arg-170 each coordinate substrate. Asn-139 contacts NAD(+). His-194 acts as the Proton acceptor in catalysis. Position 249 (Thr-249) interacts with substrate.

The protein belongs to the LDH/MDH superfamily. LDH family. Homotetramer.

Its subcellular location is the cytoplasm. The catalysed reaction is (S)-lactate + NAD(+) = pyruvate + NADH + H(+). It participates in fermentation; pyruvate fermentation to lactate; (S)-lactate from pyruvate: step 1/1. This Danio rerio (Zebrafish) protein is L-lactate dehydrogenase B-A chain (ldhba).